A 76-amino-acid chain; its full sequence is DNA-directed RNA polymerase subunit epsilon (76 aa).

The protein belongs to the RNA polymerase subunit epsilon family. As to quaternary structure, RNAP is composed of a core of 2 alpha, a beta and a beta' subunit. The core is associated with a delta subunit, and at least one of epsilon or omega. When a sigma factor is associated with the core the holoenzyme is formed, which can initiate transcription.

The enzyme catalyses RNA(n) + a ribonucleoside 5'-triphosphate = RNA(n+1) + diphosphate. In terms of biological role, a non-essential component of RNA polymerase (RNAP). The sequence is that of DNA-directed RNA polymerase subunit epsilon from Lactococcus lactis subsp. cremoris (strain MG1363).